The sequence spans 368 residues: G-protein coupled receptor 62 (368 aa).

Over 1-18 (MANSTGLNASEVAGSLGL) the chain is Extracellular. N-linked (GlcNAc...) asparagine glycosylation is found at N3 and N8. A helical membrane pass occupies residues 19–39 (ILAAVVEVGALLGNGALLVVV). Residues 40–53 (LRTPGLRDALYLAH) are Cytoplasmic-facing. The helical transmembrane segment at 54 to 74 (LCVVDLLAAASIMPLGLLAAP) threads the bilayer. The Extracellular segment spans residues 75–91 (PPGLGRVRLGPAPCRAA). A helical membrane pass occupies residues 92 to 112 (RFLSAALLPACTLGVAALGLA). The Cytoplasmic portion of the chain corresponds to 113–129 (RYRLIVHPLRPGSRPPP). The helical transmembrane segment at 130–150 (VLVLTAVWAAAGLLGALSLLG) threads the bilayer. At 151–177 (TPPAPPPAPARCSVLAGGLGPFRPLWA) the chain is on the extracellular side. The helical transmembrane segment at 178–198 (LLAFALPALLLLGAYGGIFVV) threads the bilayer. Over 199 to 239 (ARRAALRPPRPARGSRLHSDSLDSRLSILPPLRPRLPGGKA) the chain is Cytoplasmic. Residues 240-260 (ALAPALAVGQFAACWLPYGCA) traverse the membrane as a helical segment. Residues 261 to 272 (CLAPAARAAEAE) are Extracellular-facing. The chain crosses the membrane as a helical span at residues 273-293 (AAVTWVAYSAFAAHPFLYGLL). The Cytoplasmic portion of the chain corresponds to 294 to 368 (QRPVRLALGR…YQGPPESSLS (75 aa)). The segment at 332–368 (RPPEGPAVGPSEAPEQTPELAGGRSPAYQGPPESSLS) is disordered.

The protein belongs to the G-protein coupled receptor 1 family. As to quaternary structure, homodimers. Forms heterodimer with MTNR1B. Interacts with ARRB1 and ARRB2 in a spontaneous and agonist-independent manner; leading to the internalization of GPR62 in the endosomal compartment. As to expression, expressed in brain; detected in the basal forebrain, frontal cortex, caudate, putamen, thalamus and hippocampus.

Its subcellular location is the cell membrane. It is found in the endosome membrane. Orphan G-protein coupled receptor. Constitutively activates the G(q/11)/inositol phosphate and the G(s)-alpha/cAMP signaling pathways. Has spontaneous activity for beta-arrestin recruitment. Shows a reciprocal modulation of signaling functions with the melatonin receptor MTNR1B most likely through receptor heteromerization. This chain is G-protein coupled receptor 62 (GPR62), found in Homo sapiens (Human).